The primary structure comprises 129 residues: DNA base-flipping protein (129 aa).

The protein belongs to the MGMT family. ATL subfamily. In terms of assembly, interacts with HelD and UvrA.

Functionally, involved in DNA damage recognition. Binds DNA containing O(6)-methylguanine and larger O(6)-alkylguanine adducts, and to double-stranded DNA that contains an AP (apurinic/apyrimidinic) site. Binds to the damaged base and flips the base out of the DNA duplex into an extrahelical conformation, which allows processing by repair proteins. Works in partnership with the nucleotide excision repair (NER) pathway to enhance the repair of the O(6)-alkylguanine adducts larger than the methyl adduct. Also prevents methyl-directed mismatch repair (MMR)-mediated attack of the O(6)-alkylguanine:T mispairs for the larger alkyl groups. This is DNA base-flipping protein from Escherichia coli (strain K12).